We begin with the raw amino-acid sequence, 480 residues long: Na(+)/H(+) antiporter NhaA (480 aa).

The next 11 membrane-spanning stretches (helical) occupy residues 34–54, 76–96, 113–133, 144–164, 174–194, 197–217, 223–243, 282–302, 312–332, 350–370, and 381–401; these read VGGV…NIPA, LSVA…VAGI, AVLP…VYTL, GWAV…AVIG, FLLT…AIFF, RINF…WLLL, GWYV…NSGV, GLAV…GGAL, LGVV…STWL, IFAV…IGEL, and EVKA…TVLL. The disordered stretch occupies residues 454-480; that stretch reads AAEKAAAARHGGAEVPGGAGEEDGRPA.

It belongs to the NhaA Na(+)/H(+) (TC 2.A.33) antiporter family.

The protein resides in the cell membrane. The enzyme catalyses Na(+)(in) + 2 H(+)(out) = Na(+)(out) + 2 H(+)(in). Functionally, na(+)/H(+) antiporter that extrudes sodium in exchange for external protons. This Streptomyces antibioticus protein is Na(+)/H(+) antiporter NhaA.